Reading from the N-terminus, the 405-residue chain is L-carnitine CoA-transferase (405 aa).

Residues K97 and R104 each contribute to the CoA site. D169 acts as the Nucleophile in catalysis.

The protein belongs to the CoA-transferase III family. CaiB subfamily. Homodimer.

Its subcellular location is the cytoplasm. The enzyme catalyses crotonobetainyl-CoA + (R)-carnitine = crotonobetaine + (R)-carnitinyl-CoA. It carries out the reaction 4-(trimethylamino)butanoyl-CoA + (R)-carnitine = (R)-carnitinyl-CoA + 4-(trimethylamino)butanoate. It participates in amine and polyamine metabolism; carnitine metabolism. In terms of biological role, catalyzes the reversible transfer of the CoA moiety from gamma-butyrobetainyl-CoA to L-carnitine to generate L-carnitinyl-CoA and gamma-butyrobetaine. Is also able to catalyze the reversible transfer of the CoA moiety from gamma-butyrobetainyl-CoA or L-carnitinyl-CoA to crotonobetaine to generate crotonobetainyl-CoA. This chain is L-carnitine CoA-transferase, found in Escherichia coli (strain 55989 / EAEC).